A 79-amino-acid chain; its full sequence is Moronecidin (79 aa).

An N-terminal signal peptide occupies residues 1–22 (MKCATLSLVLSMVVLMAEPGDA). Gly-44 carries the glycine amide modification. The segment at 45 to 68 (GKAEQDQQDQQYQQDQQDQQAQQY) is disordered. The propeptide occupies 47–79 (AEQDQQDQQYQQDQQDQQAQQYQRFNRERAAFD). A compositionally biased stretch (low complexity) spans 52–68 (QDQQYQQDQQDQQAQQY).

Expressed in gill, skin, intestine, spleen, anterior kidney, and blood cells.

The protein resides in the secreted. Antimicrobial peptide with broad-spectrum activity against Gram-positive and Gram-negative bacteria as well as against a variety of fungi. Rapidly inactivates both channel catfish herpesvirus (ED(50)=4 uM) and frog virus 3 (ED(50)=13 uM) over a wide temperature range. Seems to disrupt the membranes by adopting an alpha helical conformation. The sequence is that of Moronecidin from Morone chrysops (White bass).